The following is a 230-amino-acid chain: Cytidylate kinase (230 aa).

13–21 is an ATP binding site; it reads GPAGTGKSS.

The protein belongs to the cytidylate kinase family. Type 1 subfamily.

The protein resides in the cytoplasm. The enzyme catalyses CMP + ATP = CDP + ADP. The catalysed reaction is dCMP + ATP = dCDP + ADP. The sequence is that of Cytidylate kinase from Mycobacterium tuberculosis (strain ATCC 25177 / H37Ra).